The sequence spans 612 residues: Bile salt-activated lipase (612 aa).

The first 20 residues, 1-20 (MGRLEVLFLGLTCCLAAACA), serve as a signal peptide directing secretion. Cysteines 84 and 100 form a disulfide. N-linked (GlcNAc...) asparagine glycosylation is present at N207. S214 acts as the Acyl-ester intermediate in catalysis. The cysteines at positions 266 and 277 are disulfide-linked. Catalysis depends on charge relay system residues D340 and H455. The interval 553-612 (VGDHTPPEDDSEAAPVPPTDDSQGGPVPPTDDSQTTPVPPTDNSQAGDSVEAQMPGPIGF) is disordered. 4 tandem repeats follow at residues 556–566 (HTPPEDDSEAA), 567–577 (PVPPTDDSQGG), 578–588 (PVPPTDDSQTT), and 589–599 (PVPPTDNSQAG). The 4 X 11 AA tandem repeats, O-glycosylated region stretch occupies residues 556–599 (HTPPEDDSEAAPVPPTDDSQGGPVPPTDDSQTTPVPPTDNSQAG). Polar residues predominate over residues 583–599 (DDSQTTPVPPTDNSQAG).

This sequence belongs to the type-B carboxylesterase/lipase family. In terms of assembly, interacts with CLC. Synthesized primarily in the pancreas and then transported to the intestine.

The protein localises to the secreted. It catalyses the reaction a triacylglycerol + H2O = a diacylglycerol + a fatty acid + H(+). The enzyme catalyses 1,2,3-tri-(9Z-octadecenoyl)-glycerol + H2O = di-(9Z)-octadecenoylglycerol + (9Z)-octadecenoate + H(+). It carries out the reaction 1,2,3-trioctanoylglycerol + H2O = dioctanoylglycerol + octanoate + H(+). The catalysed reaction is a sterol ester + H2O = a sterol + a fatty acid + H(+). It catalyses the reaction cholesteryl (9Z-octadecenoate) + H2O = cholesterol + (9Z)-octadecenoate + H(+). The enzyme catalyses an acetyl ester + H2O = an aliphatic alcohol + acetate + H(+). It carries out the reaction a butanoate ester + H2O = an aliphatic alcohol + butanoate + H(+). The catalysed reaction is 9-hexadecanoyloxy-octadecanoate + H2O = 9-hydroxy-octadecanoate + hexadecanoate + H(+). It catalyses the reaction 9-(9Z-octadecenoyloxy)-octadecanoate + H2O = 9-hydroxy-octadecanoate + (9Z)-octadecenoate + H(+). The enzyme catalyses 1-hexadecanoyl-sn-glycero-3-phosphocholine + H2O = sn-glycerol 3-phosphocholine + hexadecanoate + H(+). It carries out the reaction 12-hexadecanoyloxy-octadecanoate + H2O = 12-hydroxyoctadecanoate + hexadecanoate + H(+). The catalysed reaction is 12-(9Z-octadecenoyloxy)-octadecanoate + H2O = 12-hydroxyoctadecanoate + (9Z)-octadecenoate + H(+). It catalyses the reaction 13-(9Z-octadecenoyloxy)-octadecanoate + H2O = 13-hydroxy-octadecanoate + (9Z)-octadecenoate + H(+). The enzyme catalyses 9-(9Z-hexadecenoyloxy)-octadecanoate + H2O = (9Z)-hexadecenoate + 9-hydroxy-octadecanoate + H(+). It carries out the reaction 12-(9Z-hexadecenoyloxy)-octadecanoate + H2O = 12-hydroxyoctadecanoate + (9Z)-hexadecenoate + H(+). The catalysed reaction is 13-(9Z-hexadecenoyloxy)-octadecanoate + H2O = 13-hydroxy-octadecanoate + (9Z)-hexadecenoate + H(+). It catalyses the reaction 12-octadecanoyloxy-octadecanoate + H2O = 12-hydroxyoctadecanoate + octadecanoate + H(+). The enzyme catalyses 13-octadecanoyloxy-octadecanoate + H2O = 13-hydroxy-octadecanoate + octadecanoate + H(+). It carries out the reaction 5-(9Z-hexadecenoyloxy)-octadecanoate + H2O = 5-hydroxy-octadecanoate + (9Z)-hexadecenoate + H(+). The catalysed reaction is 9-octadecanoyloxy-octadecanoate + H2O = 9-hydroxy-octadecanoate + octadecanoate + H(+). Activated by bile salts such as sodium taurocholate. In terms of biological role, catalyzes the hydrolysis of a wide range of substrates including cholesteryl esters, phospholipids, lysophospholipids, di- and tri-acylglycerols, and fatty acid esters of hydroxy fatty acids (FAHFA). Preferentially hydrolyzes FAHFAs with the ester bond further away from the carboxylate. Unsaturated FAHFAs are hydrolyzed more quickly than saturated FAHFAs. Has an essential role in the complete digestion of dietary lipids and their intestinal absorption, along with the absorption of fat-soluble vitamins. The protein is Bile salt-activated lipase (Cel) of Rattus norvegicus (Rat).